Reading from the N-terminus, the 431-residue chain is Glucose-1-phosphate adenylyltransferase (431 aa).

Lys-39 serves as a coordination point for beta-D-fructose 1,6-bisphosphate. Positions 40, 46, and 52 each coordinate AMP. Tyr-114 contacts alpha-D-glucose 1-phosphate. Arg-130 serves as a coordination point for AMP. Residues Gly-179, 194-195 (EK), and Ser-212 each bind alpha-D-glucose 1-phosphate. AMP-binding residues include Glu-370 and Arg-386. Residues 419–423 (REMLR) and 429–431 (QER) each bind beta-D-fructose 1,6-bisphosphate.

It belongs to the bacterial/plant glucose-1-phosphate adenylyltransferase family. In terms of assembly, homotetramer.

The catalysed reaction is alpha-D-glucose 1-phosphate + ATP + H(+) = ADP-alpha-D-glucose + diphosphate. The protein operates within glycan biosynthesis; glycogen biosynthesis. With respect to regulation, allosterically activated by fructose-1,6-bisphosphate (F16BP) and inhibited by AMP. Its function is as follows. Involved in the biosynthesis of ADP-glucose, a building block required for the elongation reactions to produce glycogen. Catalyzes the reaction between ATP and alpha-D-glucose 1-phosphate (G1P) to produce pyrophosphate and ADP-Glc. The polypeptide is Glucose-1-phosphate adenylyltransferase (Shigella boydii serotype 18 (strain CDC 3083-94 / BS512)).